We begin with the raw amino-acid sequence, 397 residues long: GTPase Obg (397 aa).

The Obg domain occupies 1–159 (MKFVDEAEIR…RMLKLELMLL (159 aa)). Residues 22–44 (SFRREKYVPDGGPDGGDGGDGGS) are disordered. Residues 33 to 43 (GPDGGDGGDGG) show a composition bias toward gly residues. Residues 160–333 (ADVGLLGMPN…LCIKVMDFIE (174 aa)) form the OBG-type G domain. GTP is bound by residues 166-173 (GMPNAGKS), 191-195 (FTTLV), 213-216 (DIPG), 283-286 (NKVD), and 314-316 (SAV). Residues Ser-173 and Thr-193 each coordinate Mg(2+). Positions 359-389 (TVENYEDDDDFDDDDDDDFDGDDDDDFDGDD) are disordered. Positions 361 to 389 (ENYEDDDDFDDDDDDDFDGDDDDDFDGDD) are enriched in acidic residues.

This sequence belongs to the TRAFAC class OBG-HflX-like GTPase superfamily. OBG GTPase family. Monomer. Mg(2+) serves as cofactor.

Its subcellular location is the cytoplasm. An essential GTPase which binds GTP, GDP and possibly (p)ppGpp with moderate affinity, with high nucleotide exchange rates and a fairly low GTP hydrolysis rate. Plays a role in control of the cell cycle, stress response, ribosome biogenesis and in those bacteria that undergo differentiation, in morphogenesis control. The protein is GTPase Obg of Pseudoalteromonas atlantica (strain T6c / ATCC BAA-1087).